Reading from the N-terminus, the 517-residue chain is 3-hydroxyphenylacetate 6-hydroxylase (517 aa).

Cys-449 provides a ligand contact to heme.

The protein belongs to the cytochrome P450 family.

The catalysed reaction is 3-hydroxyphenylacetate + NADH + O2 + H(+) = homogentisate + NAD(+) + H2O. The enzyme catalyses 3-hydroxyphenylacetate + NADPH + O2 + H(+) = homogentisate + NADP(+) + H2O. It catalyses the reaction 3,4-dihydroxyphenylacetate + NADH + O2 + H(+) = 2,4,5-trihydroxyphenylacetate + NAD(+) + H2O. It carries out the reaction 3,4-dihydroxyphenylacetate + NADPH + O2 + H(+) = 2,4,5-trihydroxyphenylacetate + NADP(+) + H2O. The protein operates within aromatic compound metabolism; phenylacetate degradation. Functionally, catalyzes the hydroxylation of 3-hydroxyphenylacetate and 3,4-dihydroxyphenylacetate to 2,5-dihydroxyphenylacetate (homogentisate) and 2,4,5-trihydroxyphenylacetate, respectively. Both of these compounds are used as substrate by homogentisate dioxygenase in the homogentisate pathway. The homogentisate pathway is used to catabolize phenylacetate and use it as a carbon source. Can also catalyze the hydroxylation of phenylacetate to 2-hydroxyphenylacetate at low efficiency to compensate for loss of phacA. The sequence is that of 3-hydroxyphenylacetate 6-hydroxylase (phacB) from Emericella nidulans (Aspergillus nidulans).